A 665-amino-acid polypeptide reads, in one-letter code: Adenylate cyclase 1 (665 aa).

The disordered stretch occupies residues 1 to 25 (MLQRSESGFKDIESMQDSNADKPSR). A compositionally biased stretch (basic and acidic residues) spans 7 to 24 (SGFKDIESMQDSNADKPS). A run of 2 helical transmembrane segments spans residues 33–53 (SLLGLVMVAMLIVVSATLVGL) and 373–393 (AVSGAVVVVAVLLALVLAHLI). The region spanning 394 to 444 (TKSLNQLTDSANRLQDLDFATPIDVSSHVAEISTLNGAMNRARDAIFTFAL) is the HAMP domain. In terms of domain architecture, Guanylate cyclase spans 471–603 (TAMFTDIYDF…DTVNVASRLE (133 aa)). Residues aspartate 476 and aspartate 520 each coordinate Mg(2+).

This sequence belongs to the adenylyl cyclase class-3 family. The cofactor is Mg(2+).

It is found in the cell membrane. It catalyses the reaction ATP = 3',5'-cyclic AMP + diphosphate. Plays essential roles in regulation of cellular metabolism by catalyzing the synthesis of a second messenger, cAMP. The polypeptide is Adenylate cyclase 1 (cya1) (Rhizobium meliloti (strain 1021) (Ensifer meliloti)).